The sequence spans 197 residues: Recombination protein RecR (197 aa).

The segment at 56–71 adopts a C4-type zinc-finger fold; that stretch reads CQQCRTLTEQALCNIC. In terms of domain architecture, Toprim spans 79-174; the sequence is KELCIVETPA…KVSRIAHGIP (96 aa).

The protein belongs to the RecR family.

May play a role in DNA repair. It seems to be involved in an RecBC-independent recombinational process of DNA repair. It may act with RecF and RecO. The chain is Recombination protein RecR from Saccharophagus degradans (strain 2-40 / ATCC 43961 / DSM 17024).